The sequence spans 187 residues: Cytochrome b-245 chaperone 1 (187 aa).

The helical transmembrane segment at glycine 20 to glycine 42 threads the bilayer. Residues glutamate 167–serine 187 form a disordered region. Phosphoserine is present on residues serine 168 and serine 170.

The protein belongs to the CYBC1 family. Interacts with CYBB; CYBC1 may act as a chaperone stabilizing Cytochrome b-245 heterodimer.

The protein resides in the endoplasmic reticulum membrane. Functions as a chaperone necessary for a stable expression of the CYBA and CYBB subunits of the cytochrome b-245 heterodimer. Controls the phagocyte respiratory burst and is essential for innate immunity. The protein is Cytochrome b-245 chaperone 1 of Mus musculus (Mouse).